The sequence spans 337 residues: MTLQIGVIGCGAIGQDHIRRLTRTLSGARVVAVNDIDPQQARDAVTKYGLDAEIYGDGHDVVAAADVQALLVTSWGPTHEAFVLDAIAHGKPVFCEKPLAVTADGCMRIVEAEVAHGKRLVQVGFMRPYDEGYRALKRVIDSGEIGAPLMLHCAHRNQSVGERYTTDMAITDTLIHELDVLRWLLGEDYASAQVVYPKKTRHASAHLADPQIVLLETVSGVRIDVEIFVNCQYGYDIQCEVVGENGIAKLPDPPAVGLKHAARQSVEIMTDWKERFIASYDVELQAFIDGVRAGALTGPSAWDGYAAAVAADACVRAQRSAAVEPIAMAERPAFYRG.

The protein belongs to the Gfo/Idh/MocA family. As to quaternary structure, homotetramer.

It carries out the reaction myo-inositol + NAD(+) = scyllo-inosose + NADH + H(+). In terms of biological role, involved in the oxidation of myo-inositol (MI) to 2-keto-myo-inositol (2KMI or 2-inosose). This Burkholderia vietnamiensis (strain G4 / LMG 22486) (Burkholderia cepacia (strain R1808)) protein is Inositol 2-dehydrogenase.